A 246-amino-acid polypeptide reads, in one-letter code: UDP-N-acetyl-D-mannosaminuronic acid transferase (246 aa).

Belongs to the glycosyltransferase 26 family.

The catalysed reaction is UDP-N-acetyl-alpha-D-mannosaminouronate + N-acetyl-alpha-D-glucosaminyl-di-trans,octa-cis-undecaprenyl diphosphate = beta-D-ManNAcA-(1-&gt;4)-alpha-D-GlcNAc-di-trans,octa-cis-undecaprenyl diphosphate + UDP + H(+). The protein operates within bacterial outer membrane biogenesis; enterobacterial common antigen biosynthesis. Catalyzes the synthesis of Und-PP-GlcNAc-ManNAcA (Lipid II), the second lipid-linked intermediate involved in enterobacterial common antigen (ECA) synthesis. The chain is UDP-N-acetyl-D-mannosaminuronic acid transferase from Shigella flexneri.